Consider the following 300-residue polypeptide: Ribosomal RNA small subunit methyltransferase H (300 aa).

S-adenosyl-L-methionine contacts are provided by residues 43–45 (AGH), aspartate 60, aspartate 105, and glutamine 112.

It belongs to the methyltransferase superfamily. RsmH family.

It is found in the cytoplasm. It carries out the reaction cytidine(1402) in 16S rRNA + S-adenosyl-L-methionine = N(4)-methylcytidine(1402) in 16S rRNA + S-adenosyl-L-homocysteine + H(+). Functionally, specifically methylates the N4 position of cytidine in position 1402 (C1402) of 16S rRNA. This Deinococcus deserti (strain DSM 17065 / CIP 109153 / LMG 22923 / VCD115) protein is Ribosomal RNA small subunit methyltransferase H.